Reading from the N-terminus, the 274-residue chain is MAIKSYKPTSAGRRHQTCSTFEEITSTTPEKSLLVKIKKTGGRNHFGRVTARHQGGGHKQKYRMIDFRRDKRGIPAKVATIEYDPNRSARIALLHYTDGEKRYILAPLDLKVGDTVLSGPEADIKPGNSLPLRSIPLGTIIHNIELKIGKGAQLARSAGTFAQLMSKEGKYSQVKLPSGEVRLVLQDCYATIGQVGNIDHENVCLGKAGRSRWLGKRPKVRGVAMNPVDHPHGGGEGRTSGGRHPVTPWGIPTKGYKTRTNKTSDRFIVKKRTK.

The segment at 223 to 256 (VAMNPVDHPHGGGEGRTSGGRHPVTPWGIPTKGY) is disordered.

It belongs to the universal ribosomal protein uL2 family. Part of the 50S ribosomal subunit. Forms a bridge to the 30S subunit in the 70S ribosome.

One of the primary rRNA binding proteins. Required for association of the 30S and 50S subunits to form the 70S ribosome, for tRNA binding and peptide bond formation. It has been suggested to have peptidyltransferase activity; this is somewhat controversial. Makes several contacts with the 16S rRNA in the 70S ribosome. The polypeptide is Large ribosomal subunit protein uL2 (Trichlorobacter lovleyi (strain ATCC BAA-1151 / DSM 17278 / SZ) (Geobacter lovleyi)).